The chain runs to 142 residues: Sec-independent protein translocase protein TatB (142 aa).

Residues 1 to 21 (MFDIGASELLVLVIVAIVVIG) traverse the membrane as a helical segment. The disordered stretch occupies residues 75–142 (RETAAQETAA…PAARPGSQQP (68 aa)). Residues 76-94 (ETAAQETAAAQGQTPAAAE) are compositionally biased toward low complexity. Residues 123–133 (AKVEARVEEAP) show a composition bias toward basic and acidic residues.

The protein belongs to the TatB family. As to quaternary structure, the Tat system comprises two distinct complexes: a TatABC complex, containing multiple copies of TatA, TatB and TatC subunits, and a separate TatA complex, containing only TatA subunits. Substrates initially bind to the TatABC complex, which probably triggers association of the separate TatA complex to form the active translocon.

The protein resides in the cell inner membrane. Part of the twin-arginine translocation (Tat) system that transports large folded proteins containing a characteristic twin-arginine motif in their signal peptide across membranes. Together with TatC, TatB is part of a receptor directly interacting with Tat signal peptides. TatB may form an oligomeric binding site that transiently accommodates folded Tat precursor proteins before their translocation. The protein is Sec-independent protein translocase protein TatB of Novosphingobium aromaticivorans (strain ATCC 700278 / DSM 12444 / CCUG 56034 / CIP 105152 / NBRC 16084 / F199).